Here is a 520-residue protein sequence, read N- to C-terminus: DNA-(apurinic or apyrimidinic site) endonuclease 2 (520 aa).

Glu-59 provides a ligand contact to Mg(2+). The active site involves Tyr-181. Mg(2+) is bound by residues Asp-222, Asn-224, and Asp-353. The active-site Proton donor/acceptor is Asp-222. The Zn(2+) site is built by Cys-476, His-478, Cys-500, and Cys-514. The GRF-type zinc finger occupies Cys-476–Val-520.

This sequence belongs to the DNA repair enzymes AP/ExoA family. Mg(2+) serves as cofactor. Requires Mn(2+) as cofactor.

The protein localises to the nucleus. The enzyme catalyses Exonucleolytic cleavage in the 3'- to 5'-direction to yield nucleoside 5'-phosphates.. Its function is as follows. DNA repair enzyme that cleaves apurinic/apyrimidinic (AP) sites and removes 3'-blocking groups present at single strand breaks of damaged DNA. The polypeptide is DNA-(apurinic or apyrimidinic site) endonuclease 2 (APN2) (Saccharomyces cerevisiae (strain ATCC 204508 / S288c) (Baker's yeast)).